The sequence spans 394 residues: Elongation factor Tu 2 (394 aa).

In terms of domain architecture, tr-type G spans 10–204 (KPHVNVGTIG…ALDSYIPEPE (195 aa)). Residues 19–26 (GHVDHGKT) form a G1 region. 19–26 (GHVDHGKT) contacts GTP. T26 lines the Mg(2+) pocket. The G2 stretch occupies residues 60–64 (GITIN). Positions 81–84 (DCPG) are G3. Residues 81 to 85 (DCPGH) and 136 to 139 (NKCD) contribute to the GTP site. A G4 region spans residues 136 to 139 (NKCD). The interval 174–176 (SAL) is G5.

This sequence belongs to the TRAFAC class translation factor GTPase superfamily. Classic translation factor GTPase family. EF-Tu/EF-1A subfamily. Monomer.

It localises to the cytoplasm. The catalysed reaction is GTP + H2O = GDP + phosphate + H(+). Functionally, GTP hydrolase that promotes the GTP-dependent binding of aminoacyl-tRNA to the A-site of ribosomes during protein biosynthesis. This is Elongation factor Tu 2 from Shewanella loihica (strain ATCC BAA-1088 / PV-4).